Consider the following 160-residue polypeptide: 2-C-methyl-D-erythritol 2,4-cyclodiphosphate synthase (160 aa).

Positions 11 and 13 each coordinate a divalent metal cation. Residues 11–13 (DIH) and 37–38 (HS) contribute to the 4-CDP-2-C-methyl-D-erythritol 2-phosphate site. Histidine 45 provides a ligand contact to a divalent metal cation. Residues 59-61 (DIG), 135-138 (TTNE), and arginine 145 contribute to the 4-CDP-2-C-methyl-D-erythritol 2-phosphate site.

Belongs to the IspF family. As to quaternary structure, homotrimer. A divalent metal cation serves as cofactor.

The enzyme catalyses 4-CDP-2-C-methyl-D-erythritol 2-phosphate = 2-C-methyl-D-erythritol 2,4-cyclic diphosphate + CMP. It participates in isoprenoid biosynthesis; isopentenyl diphosphate biosynthesis via DXP pathway; isopentenyl diphosphate from 1-deoxy-D-xylulose 5-phosphate: step 4/6. Functionally, involved in the biosynthesis of isopentenyl diphosphate (IPP) and dimethylallyl diphosphate (DMAPP), two major building blocks of isoprenoid compounds. Catalyzes the conversion of 4-diphosphocytidyl-2-C-methyl-D-erythritol 2-phosphate (CDP-ME2P) to 2-C-methyl-D-erythritol 2,4-cyclodiphosphate (ME-CPP) with a corresponding release of cytidine 5-monophosphate (CMP). In Synechococcus elongatus (strain ATCC 33912 / PCC 7942 / FACHB-805) (Anacystis nidulans R2), this protein is 2-C-methyl-D-erythritol 2,4-cyclodiphosphate synthase.